A 316-amino-acid polypeptide reads, in one-letter code: Taste receptor type 2 member 3 (316 aa).

At 1 to 7 (MFGFIEG) the chain is on the extracellular side. A helical membrane pass occupies residues 8–28 (VFLVLTITEFILGNLVNGFIV). The Cytoplasmic portion of the chain corresponds to 29–50 (SINSSYWFKSKKISLSNFIITS). A helical membrane pass occupies residues 51–71 (LALFRIFLLWIIFIDSLIIVF). The Extracellular segment spans residues 72 to 86 (SYQTHDSGIMMQLID). A helical transmembrane segment spans residues 87–107 (VFWTFTNHFSIWLISCLSVFY). The Cytoplasmic segment spans residues 108–128 (CLKIASFSHPSFLWLKWRASR). The helical transmembrane segment at 129–149 (VVVGMLWGALLLSCVSTMSLM) threads the bilayer. Topologically, residues 150–186 (NEFKIYSALTRSKDTPNMTEYIRLKRQEYNLMHVLGN) are extracellular. The N-linked (GlcNAc...) asparagine glycan is linked to N166. The helical transmembrane segment at 187–207 (LWKIPSLIVSLVAYLLLLLSL) threads the bilayer. Over 208–234 (GKHTQQMQQYSIDSRDQSAEAHKRAMR) the chain is Cytoplasmic. Residues 235–255 (IISSFLLFFLFYFLSFMILSS) form a helical membrane-spanning segment. Topologically, residues 256 to 266 (SRFLPETRIAR) are extracellular. The chain crosses the membrane as a helical span at residues 267 to 287 (IIGVVISMSYLVGDSFILIVC). The Cytoplasmic segment spans residues 288 to 316 (NNKLKHTFVAMLPCECGHLKPGSKGPSAS).

The protein belongs to the G-protein coupled receptor T2R family.

The protein resides in the membrane. Functionally, gustducin-coupled receptor implicated in the perception of bitter compounds in the oral cavity and the gastrointestinal tract. Signals through PLCB2 and the calcium-regulated cation channel TRPM5. This is Taste receptor type 2 member 3 (Tas2r3) from Mus musculus (Mouse).